A 398-amino-acid polypeptide reads, in one-letter code: 1-deoxy-D-xylulose 5-phosphate reductoisomerase (398 aa).

NADPH contacts are provided by T10, G11, S12, I13, G36, R37, N38, and N124. K125 contributes to the 1-deoxy-D-xylulose 5-phosphate binding site. NADPH is bound at residue E126. D150 lines the Mn(2+) pocket. The 1-deoxy-D-xylulose 5-phosphate site is built by S151, E152, S186, and H209. Mn(2+) is bound at residue E152. G215 contributes to the NADPH binding site. Residues S222, N227, K228, and E231 each contribute to the 1-deoxy-D-xylulose 5-phosphate site. E231 contributes to the Mn(2+) binding site.

The protein belongs to the DXR family. In terms of assembly, homodimer. Mg(2+) is required as a cofactor. Mn(2+) serves as cofactor.

It catalyses the reaction 2-C-methyl-D-erythritol 4-phosphate + NADP(+) = 1-deoxy-D-xylulose 5-phosphate + NADPH + H(+). It participates in isoprenoid biosynthesis; isopentenyl diphosphate biosynthesis via DXP pathway; isopentenyl diphosphate from 1-deoxy-D-xylulose 5-phosphate: step 1/6. Its function is as follows. Catalyzes the NADPH-dependent rearrangement and reduction of 1-deoxy-D-xylulose-5-phosphate (DXP) to 2-C-methyl-D-erythritol 4-phosphate (MEP). The chain is 1-deoxy-D-xylulose 5-phosphate reductoisomerase from Yersinia pseudotuberculosis serotype IB (strain PB1/+).